The sequence spans 242 residues: tRNA (guanine-N(1)-)-methyltransferase (242 aa).

Residues Gly-108 and 127–132 (IGDYVL) each bind S-adenosyl-L-methionine.

This sequence belongs to the RNA methyltransferase TrmD family. Homodimer.

It is found in the cytoplasm. It catalyses the reaction guanosine(37) in tRNA + S-adenosyl-L-methionine = N(1)-methylguanosine(37) in tRNA + S-adenosyl-L-homocysteine + H(+). Its function is as follows. Specifically methylates guanosine-37 in various tRNAs. The sequence is that of tRNA (guanine-N(1)-)-methyltransferase from Lactobacillus acidophilus (strain ATCC 700396 / NCK56 / N2 / NCFM).